The following is a 496-amino-acid chain: MFS transporter cpaT (496 aa).

Residues 1–45 (MGHQEEPPRICKTPSGHEQGEGPAEKTSKPSTEEVGWDGPTDPAR) are disordered. Residues 18 to 32 (EQGEGPAEKTSKPST) are compositionally biased toward basic and acidic residues. N-linked (GlcNAc...) asparagine glycosylation occurs at Asn48. A helical membrane pass occupies residues 58 to 78 (MGIISYLTFLTPLTSSIVAPA). Asn90 carries N-linked (GlcNAc...) asparagine glycosylation. Transmembrane regions (helical) follow at residues 93 to 113 (LASF…LFLA), 130 to 150 (FIFT…ALLV), 154 to 174 (FAGI…ADMF), 180 to 200 (GVAM…GPIA), and 212 to 232 (WVFW…LFVL). N-linked (GlcNAc...) asparagine glycosylation occurs at Asn252. 6 helical membrane-spanning segments follow: residues 288–308 (VALF…LFTT), 325–345 (GLVY…FGAL), 367–387 (LPPL…YGWS), 395–415 (IMPI…LLPI), 427–449 (AASA…PLAG), and 463–483 (SLLG…YFYG).

Belongs to the major facilitator superfamily.

It is found in the membrane. MFS transporter; part of the gene cluster that mediates the biosynthesis of the fungal neurotoxin cyclopiazonic acid (CPA), a nanomolar inhibitor of Ca(2+)-ATPase with a unique pentacyclic indole tetramic acid scaffold. The chain is MFS transporter cpaT from Aspergillus oryzae (Yellow koji mold).